Reading from the N-terminus, the 296-residue chain is Formamidopyrimidine-DNA glycosylase (296 aa).

The active-site Schiff-base intermediate with DNA is the Pro2. Catalysis depends on Glu3, which acts as the Proton donor. Lys58 (proton donor; for beta-elimination activity) is an active-site residue. Residues His104, Arg126, and Lys169 each contribute to the DNA site. The FPG-type zinc finger occupies 260 to 296; sequence SVYDRAGEACRKPGCDGTVTRIVQAGRSTFHCPRCQK. Arg286 acts as the Proton donor; for delta-elimination activity in catalysis.

Belongs to the FPG family. Monomer. Zn(2+) is required as a cofactor.

It carries out the reaction Hydrolysis of DNA containing ring-opened 7-methylguanine residues, releasing 2,6-diamino-4-hydroxy-5-(N-methyl)formamidopyrimidine.. The enzyme catalyses 2'-deoxyribonucleotide-(2'-deoxyribose 5'-phosphate)-2'-deoxyribonucleotide-DNA = a 3'-end 2'-deoxyribonucleotide-(2,3-dehydro-2,3-deoxyribose 5'-phosphate)-DNA + a 5'-end 5'-phospho-2'-deoxyribonucleoside-DNA + H(+). In terms of biological role, involved in base excision repair of DNA damaged by oxidation or by mutagenic agents. Acts as a DNA glycosylase that recognizes and removes damaged bases. Has a preference for oxidized purines, such as 7,8-dihydro-8-oxoguanine (8-oxoG). Has AP (apurinic/apyrimidinic) lyase activity and introduces nicks in the DNA strand. Cleaves the DNA backbone by beta-delta elimination to generate a single-strand break at the site of the removed base with both 3'- and 5'-phosphates. This is Formamidopyrimidine-DNA glycosylase from Sinorhizobium fredii (strain NBRC 101917 / NGR234).